Reading from the N-terminus, the 82-residue chain is U7-hexatoxin-Mg1a (82 aa).

Positions 1-26 are cleaved as a signal peptide; that stretch reads MRTIVFLIVSILLLSSAVLMLAEGNA. A propeptide spanning residues 27 to 44 is cleaved from the precursor; the sequence is ASHELQEYPIEESLEEQR. 4 disulfide bridges follow: cysteine 46-cysteine 62, cysteine 51-cysteine 67, cysteine 61-cysteine 77, and cysteine 69-cysteine 75. Residue arginine 80 is modified to Arginine amide.

Belongs to the rTX family. As to expression, expressed by the venom gland.

It is found in the secreted. In terms of biological role, induces flaccid paralysis when injected into lepidopteran larvae. Intracranial injection into mice causes awkwardness of movement and laboured respiration until death. This Macrothele gigas (Japanese funnel web spider) protein is U7-hexatoxin-Mg1a.